The sequence spans 523 residues: Probable malate:quinone oxidoreductase (523 aa).

It belongs to the MQO family. It depends on FAD as a cofactor.

The catalysed reaction is (S)-malate + a quinone = a quinol + oxaloacetate. It functions in the pathway carbohydrate metabolism; tricarboxylic acid cycle; oxaloacetate from (S)-malate (quinone route): step 1/1. The polypeptide is Probable malate:quinone oxidoreductase (Agrobacterium fabrum (strain C58 / ATCC 33970) (Agrobacterium tumefaciens (strain C58))).